The primary structure comprises 315 residues: Olfactory receptor 52R1 (315 aa).

Residues 1–28 (MVLASGNSSSHPVSFILLGIPGLESFQL) are Extracellular-facing. The N-linked (GlcNAc...) asparagine glycan is linked to N7. A helical transmembrane segment spans residues 29-49 (WIAFPFCATYAVAVVGNITLL). The Cytoplasmic portion of the chain corresponds to 50–57 (HVIRIDHT). Residues 58–78 (LHEPMYLFLAMLAITDLVLSS) form a helical membrane-spanning segment. At 79–102 (STQPKMLAIFWFHAHEIQYHACLI) the chain is on the extracellular side. C100 and C192 are joined by a disulfide. Residues 103–123 (QVFFIHAFSSVESGVLMAMAL) traverse the membrane as a helical segment. The Cytoplasmic segment spans residues 124–142 (DCYVAICFPLRHSSILTPS). A helical membrane pass occupies residues 143–163 (VVIKLGTIVMLRGLLWVSPFC). Over 164–199 (FMVSRMPFCQHQAIPQSYCEHMAVLKLVCADTSISR) the chain is Extracellular. Residues 200–220 (GNGLFVAFSVAGFDMIVIGMS) form a helical membrane-spanning segment. Residues 221 to 240 (YVMILRAVLQLPSGEARLKA) are Cytoplasmic-facing. A helical membrane pass occupies residues 241 to 261 (FSTRSSHICVILALYIPALFS). Residues 262–276 (FLTYRFGHDVPRVVH) lie on the Extracellular side of the membrane. A helical transmembrane segment spans residues 277 to 297 (ILFANLYLLIPPMLNPIIYGV). The Cytoplasmic segment spans residues 298–315 (RTKQIGDRVIQGCCGNIP).

Belongs to the G-protein coupled receptor 1 family.

It localises to the cell membrane. Its function is as follows. Odorant receptor. The protein is Olfactory receptor 52R1 (OR52R1) of Homo sapiens (Human).